The primary structure comprises 355 residues: Peptide chain release factor 1 (355 aa).

Gln230 carries the post-translational modification N5-methylglutamine.

Belongs to the prokaryotic/mitochondrial release factor family. Methylated by PrmC. Methylation increases the termination efficiency of RF1.

Its subcellular location is the cytoplasm. Its function is as follows. Peptide chain release factor 1 directs the termination of translation in response to the peptide chain termination codons UAG and UAA. This chain is Peptide chain release factor 1, found in Geobacter metallireducens (strain ATCC 53774 / DSM 7210 / GS-15).